We begin with the raw amino-acid sequence, 176 residues long: Translation initiation factor IF-3 (176 aa).

The protein belongs to the IF-3 family. As to quaternary structure, monomer.

The protein resides in the cytoplasm. In terms of biological role, IF-3 binds to the 30S ribosomal subunit and shifts the equilibrium between 70S ribosomes and their 50S and 30S subunits in favor of the free subunits, thus enhancing the availability of 30S subunits on which protein synthesis initiation begins. The polypeptide is Translation initiation factor IF-3 (Streptococcus mutans serotype c (strain ATCC 700610 / UA159)).